Here is a 343-residue protein sequence, read N- to C-terminus: L-threonine 3-dehydrogenase (343 aa).

Zn(2+) is bound at residue Cys40. Active-site charge relay system residues include Thr42 and His45. 6 residues coordinate Zn(2+): His65, Glu66, Cys95, Cys98, Cys101, and Cys109. Residues Ile177, Asp197, Arg202, Leu264–Ile266, and Ile288–Tyr289 contribute to the NAD(+) site.

It belongs to the zinc-containing alcohol dehydrogenase family. Homotetramer. It depends on Zn(2+) as a cofactor.

The protein localises to the cytoplasm. The catalysed reaction is L-threonine + NAD(+) = (2S)-2-amino-3-oxobutanoate + NADH + H(+). It participates in amino-acid degradation; L-threonine degradation via oxydo-reductase pathway; glycine from L-threonine: step 1/2. Functionally, catalyzes the NAD(+)-dependent oxidation of L-threonine to 2-amino-3-ketobutyrate. The sequence is that of L-threonine 3-dehydrogenase from Aliivibrio salmonicida (strain LFI1238) (Vibrio salmonicida (strain LFI1238)).